Consider the following 63-residue polypeptide: Cecropin-B (63 aa).

An N-terminal signal peptide occupies residues 1-22 (MNFAKILSFVFALVLALSMTSA). A propeptide spans 23-26 (APEP) (removed by a dipeptidylpeptidase). K47 is modified (5-hydroxylysine; partial). Residue I61 is modified to Isoleucine amide.

Belongs to the cecropin family. In terms of processing, lepidopteran-B differs from lepidopteran-A by its hydroxylated residue. In terms of tissue distribution, highest expression in fat body and hemocytes. Is also expressed in Malpighian tubules and to a much lesser extent in midgut. Not present in silk gland.

It localises to the secreted. In terms of biological role, cecropins have lytic and antibacterial activity against several Gram-positive and Gram-negative bacteria. This chain is Cecropin-B (CECB1), found in Bombyx mori (Silk moth).